The following is a 75-amino-acid chain: Dermaseptin-SP5 (75 aa).

Positions 1-22 (MAFLKKSLFLVLFLGLVSLSMC) are cleaved as a signal peptide. A propeptide spanning residues 23–45 (EEEKRENEVEEEQEDDEQSELRR) is cleaved from the precursor. Positions 26–46 (KRENEVEEEQEDDEQSELRRS) are disordered. Residues 30 to 40 (EVEEEQEDDEQ) show a composition bias toward acidic residues. Position 72 is a proline amide (proline 72). A propeptide spanning residues 74–75 (EQ) is cleaved from the precursor.

This sequence belongs to the frog skin active peptide (FSAP) family. Dermaseptin subfamily. As to expression, expressed by the skin glands.

It localises to the secreted. It is found in the target cell membrane. Antimicrobial peptide with weak activity against Gram-positive and Gram-negative bacteria and fungi. Has been tested against E.coli (MIC=96.06-256 uM), S.aureus (MIC&gt;192.12 uM), K.pneumoniae (MIC&gt;189.00 uM) and C.albicans (MIC=384.24-1024 uM). Probably acts by disturbing membrane functions with its alpha-helical amphipathic structure. May penetrate bacterial membranes, but stay at the mammalian membrane surface. Does not show hemolytic activity. Does not interact at all with cardiolipin. This chain is Dermaseptin-SP5, found in Agalychnis spurrelli (Gliding leaf frog).